The sequence spans 510 residues: Inner membrane protein YeeR (510 aa).

A topological domain (cytoplasmic) is located at residue M1. The helical transmembrane segment at 2–22 (LQIVGALILLIAGFAILRLLF) threads the bilayer. The Periplasmic segment spans residues 23–30 (RALISTAS). Residues 31–51 (ALAGLILLCLFGPALLAGYIT) form a helical membrane-spanning segment. At 52–61 (ERITRLFHIR) the chain is on the cytoplasmic side. A helical membrane pass occupies residues 62–82 (WLAGVFLTIAGMIISFMWGLD). Residues 83–94 (GKHIALEAHTFD) are Periplasmic-facing. Residues 95–115 (SVKFILTTALAGGLLAVPLQI) form a helical membrane-spanning segment. The Cytoplasmic portion of the chain corresponds to 116–136 (KNIQQNGITPEDISKEINGYY). The chain crosses the membrane as a helical span at residues 137–157 (CCFYTAFFLMACSACAPLIAL). Residues 158-164 (QYDISPS) lie on the Periplasmic side of the membrane. Residues 165–185 (LMWWGGLLYWLAALVTLLWAA) form a helical membrane-spanning segment. Residues 186-510 (SQIQALKKLT…KIREGKVEER (325 aa)) are Cytoplasmic-facing.

Its subcellular location is the cell inner membrane. This Escherichia coli (strain K12) protein is Inner membrane protein YeeR (yeeR).